The chain runs to 287 residues: Protease HtpX (287 aa).

The next 2 membrane-spanning stretches (helical) occupy residues 4–24 and 33–53; these read IFLL…VMSI and GGLL…SLAI. His139 contributes to the Zn(2+) binding site. Glu140 is an active-site residue. His143 provides a ligand contact to Zn(2+). 2 helical membrane passes run 154–174 and 195–215; these read LIQG…AGII and AVVF…VAYF. Glu220 is a binding site for Zn(2+).

Belongs to the peptidase M48B family. The cofactor is Zn(2+).

Its subcellular location is the cell inner membrane. The sequence is that of Protease HtpX from Shewanella frigidimarina (strain NCIMB 400).